The following is a 265-amino-acid chain: tRNA (guanine-N(7)-)-methyltransferase (265 aa).

S-adenosyl-L-methionine is bound by residues glutamate 96, glutamate 121, aspartate 148, and aspartate 170. Aspartate 170 is a catalytic residue. The substrate site is built by lysine 174 and aspartate 206.

It belongs to the class I-like SAM-binding methyltransferase superfamily. TrmB family.

It carries out the reaction guanosine(46) in tRNA + S-adenosyl-L-methionine = N(7)-methylguanosine(46) in tRNA + S-adenosyl-L-homocysteine. It participates in tRNA modification; N(7)-methylguanine-tRNA biosynthesis. Its function is as follows. Catalyzes the formation of N(7)-methylguanine at position 46 (m7G46) in tRNA. This is tRNA (guanine-N(7)-)-methyltransferase from Rhodopseudomonas palustris (strain ATCC BAA-98 / CGA009).